Here is a 243-residue protein sequence, read N- to C-terminus: Small ribosomal subunit protein uS2c (243 aa).

The segment at 224–243 (GNNGKVSSDQEDTQELQTVQ) is disordered.

This sequence belongs to the universal ribosomal protein uS2 family.

It localises to the plastid. The protein resides in the chloroplast. In Rhodomonas salina (Cryptomonas salina), this protein is Small ribosomal subunit protein uS2c (rps2).